Here is a 585-residue protein sequence, read N- to C-terminus: MTHTLPTQNVFKRFAVYLKDFKLAFGVAIIGMVGYSLIDAYVISLLQPIIDGNGGKWDYDYLRIAAYFVIPVFIARGIFNFMGTYTLSWISSQVVMKMREQLFHQYMHLPVEFHDHHPSGQLISKVIYDTEQVAGAAGKAFLTLVREGALVFGLLFWMFYHSWQLSLVFILIGPLVAMIVSVVSKRFRLVSKNIQQAMGNLTSSAEQIIKGHKVVLMFGGQDLEASRFAKKNNNNRQQNMKLVIAQILSVSSIQVIASVALAVVLYISSKPNFITDLTPGTFVTVVVAMTMLLKPLKQLTTVNSEFQKGMAACVSIFSVLDNAIEKDTGSKVLDKAKGKLEFRDVTFHYPNKEEAALSDMSFTVEPGKTFALVGRSGSGKSTISSLLTRFYDAQQGTILLDDVPLQDFKLKDLRRQFALVSQHVTLFNDTIANNIAYGSEGRVTPEQVLAAAKTAHALEFIEQLPNGMETLIGENGLMLSGGQRQRLAIARAVLLDAPVLILDEATSALDTESERLIQDALETLQQDRTSIVVAHRLSTIESADQILVIERGRILEQGDHASLLSEDGAYAQLHKLQFGDGQTDA.

Transmembrane regions (helical) follow at residues 23–43, 64–84, 140–160, 163–183, 247–267, and 273–293; these read LAFG…AYVI, IAAY…FMGT, AFLT…WMFY, WQLS…VSVV, ILSV…VLYI, and FITD…TMLL. The ABC transmembrane type-1 domain maps to 27–308; sequence VAIIGMVGYS…LTTVNSEFQK (282 aa). The region spanning 340 to 576 is the ABC transporter domain; it reads LEFRDVTFHY…DGAYAQLHKL (237 aa). 374 to 381 contacts ATP; it reads GRSGSGKS.

Belongs to the ABC transporter superfamily. Lipid exporter (TC 3.A.1.106) family. As to quaternary structure, homodimer.

The protein resides in the cell inner membrane. It catalyses the reaction ATP + H2O + lipid A-core oligosaccharideSide 1 = ADP + phosphate + lipid A-core oligosaccharideSide 2.. In terms of biological role, involved in lipopolysaccharide (LPS) biosynthesis. Translocates lipid A-core from the inner to the outer leaflet of the inner membrane. Transmembrane domains (TMD) form a pore in the inner membrane and the ATP-binding domain (NBD) is responsible for energy generation. The chain is ATP-dependent lipid A-core flippase from Pseudoalteromonas atlantica (strain T6c / ATCC BAA-1087).